Here is a 108-residue protein sequence, read N- to C-terminus: Translation initiation factor 1A (108 aa).

The S1-like domain maps to 10-84 (IRVITPNKKS…EKGDIIYRYT (75 aa)).

Belongs to the eIF-1A family.

Its function is as follows. Seems to be required for maximal rate of protein biosynthesis. Enhances ribosome dissociation into subunits and stabilizes the binding of the initiator Met-tRNA(I) to 40 S ribosomal subunits. The protein is Translation initiation factor 1A of Picrophilus torridus (strain ATCC 700027 / DSM 9790 / JCM 10055 / NBRC 100828 / KAW 2/3).